Reading from the N-terminus, the 240-residue chain is uncharacterized protein (240 aa).

A signal peptide spans 1-17 (MRMAFMLLALLFSFRNA).

This is an uncharacterized protein from Treponema pallidum (strain Nichols).